The following is a 95-amino-acid chain: Small ubiquitin-related modifier 2-A (95 aa).

Lys11 is covalently cross-linked (Glycyl lysine isopeptide (Lys-Gly) (interchain with G-Cter in SUMO)). In terms of domain architecture, Ubiquitin-like spans 16-95; it reads DHINLKVAGQ…VFQQQTGGSF (80 aa). Residue Gly93 forms a Glycyl lysine isopeptide (Gly-Lys) (interchain with K-? in acceptor proteins) linkage. Residues 94–95 constitute a propeptide that is removed on maturation; the sequence is SF.

It belongs to the ubiquitin family. SUMO subfamily. As to quaternary structure, interacts with sae2 and ube2i. Covalently attached to a number of proteins, including top2. In terms of processing, polymeric chains can be formed through Lys-11 cross-linking. Cleavage of precursor form by a sentrin-specific protease is necessary for function.

The protein localises to the nucleus. Ubiquitin-like protein that can be covalently attached to proteins as a monomer or as a lysine-linked polymer. Covalent attachment via an isopeptide bond to its substrates requires prior activation by the E1 complex sae1-sae2 and linkage to the E2 enzyme ube2i, and can be promoted by an E3 ligase such as pias1-4. This post-translational modification on lysine residues of proteins plays a crucial role in a number of cellular processes such as nuclear transport, DNA replication and repair, mitosis and signal transduction. Polymeric sumo2 chains are also susceptible to polyubiquitination which functions as a signal for proteasomal degradation of modified proteins. The protein is Small ubiquitin-related modifier 2-A (sumo2-a) of Xenopus laevis (African clawed frog).